Reading from the N-terminus, the 273-residue chain is Outer surface protein A (273 aa).

Positions 1–16 are cleaved as a signal peptide; the sequence is MKKYLLGIGLILALIA. Cysteine 17 carries the N-palmitoyl cysteine lipid modification. Cysteine 17 carries S-diacylglycerol cysteine lipidation.

The protein belongs to the OspA lipoprotein family.

It localises to the cell outer membrane. Its subcellular location is the cell surface. Functionally, induces host (human and mouse) cytokine release by monocyte cell lines via TLR2 and CD14; nonlipidated protein does not stimulate host cells. The sequence is that of Outer surface protein A from Borreliella burgdorferi (strain ATCC 35210 / DSM 4680 / CIP 102532 / B31) (Borrelia burgdorferi).